The primary structure comprises 320 residues: D-alanine--D-alanine ligase (320 aa).

An ATP-grasp domain is found at 104–308 (KRVCLSHGVP…YEDLCVEILR (205 aa)). Position 134–189 (134–189 (AAEFGMPLMLKAPHEGSTIGIAKVETAEGMQAGFDLCAKYDDVVLVEQFVKGRELT)) interacts with ATP. Mg(2+)-binding residues include aspartate 261, glutamate 275, and asparagine 277.

This sequence belongs to the D-alanine--D-alanine ligase family. The cofactor is Mg(2+). It depends on Mn(2+) as a cofactor.

The protein resides in the cytoplasm. The catalysed reaction is 2 D-alanine + ATP = D-alanyl-D-alanine + ADP + phosphate + H(+). It participates in cell wall biogenesis; peptidoglycan biosynthesis. In terms of biological role, cell wall formation. In Janthinobacterium sp. (strain Marseille) (Minibacterium massiliensis), this protein is D-alanine--D-alanine ligase.